The chain runs to 323 residues: UPF0200/UPF0201 protein AF_1395 (323 aa).

The UPF0200 stretch occupies residues 1 to 185 (MVLEMKVIAF…EKIRQILLKL (185 aa)). 12–19 (GYPLSGKS) provides a ligand contact to ATP. Residues 186-323 (AKNVEIEIRT…GRPVKEIDKL (138 aa)) form a UPF0201 region.

The protein in the N-terminal section; belongs to the UPF0200 family. In the C-terminal section; belongs to the UPF0201 family.

The polypeptide is UPF0200/UPF0201 protein AF_1395 (Archaeoglobus fulgidus (strain ATCC 49558 / DSM 4304 / JCM 9628 / NBRC 100126 / VC-16)).